Consider the following 164-residue polypeptide: Ubiquitin-conjugating enzyme E2 2 (164 aa).

In terms of domain architecture, UBC core spans 4-150 (PARRRLMRDF…VKETVEKSWE (147 aa)). Residue Cys-88 is the Glycyl thioester intermediate of the active site.

This sequence belongs to the ubiquitin-conjugating enzyme family.

Its subcellular location is the cytoplasm. It localises to the nucleus. The catalysed reaction is S-ubiquitinyl-[E1 ubiquitin-activating enzyme]-L-cysteine + [E2 ubiquitin-conjugating enzyme]-L-cysteine = [E1 ubiquitin-activating enzyme]-L-cysteine + S-ubiquitinyl-[E2 ubiquitin-conjugating enzyme]-L-cysteine.. It participates in protein modification; protein ubiquitination. In terms of biological role, catalyzes the covalent attachment of ubiquitin to other proteins. Plays a role in transcription regulation by catalyzing the monoubiquitination of histone H2B to form H2BK123ub1. H2BK123ub1 gives a specific tag for epigenetic transcriptional activation and is also a prerequisite for H3K4me and H3K79me formation. Also involved in postreplication repair of UV-damaged DNA, in N-end rule-dependent protein degradation and in sporulation. The sequence is that of Ubiquitin-conjugating enzyme E2 2 (UBC2) from Kluyveromyces lactis (strain ATCC 8585 / CBS 2359 / DSM 70799 / NBRC 1267 / NRRL Y-1140 / WM37) (Yeast).